We begin with the raw amino-acid sequence, 138 residues long: Small ribosomal subunit protein uS9 (138 aa).

It belongs to the universal ribosomal protein uS9 family.

The polypeptide is Small ribosomal subunit protein uS9 (rps9) (Sulfolobus acidocaldarius (strain ATCC 33909 / DSM 639 / JCM 8929 / NBRC 15157 / NCIMB 11770)).